The following is a 295-amino-acid chain: Ribosomal RNA small subunit methyltransferase A (295 aa).

S-adenosyl-L-methionine-binding residues include Asn-25, Leu-27, Gly-52, Glu-73, Asp-98, and Asn-120.

This sequence belongs to the class I-like SAM-binding methyltransferase superfamily. rRNA adenine N(6)-methyltransferase family. RsmA subfamily.

The protein resides in the cytoplasm. The enzyme catalyses adenosine(1518)/adenosine(1519) in 16S rRNA + 4 S-adenosyl-L-methionine = N(6)-dimethyladenosine(1518)/N(6)-dimethyladenosine(1519) in 16S rRNA + 4 S-adenosyl-L-homocysteine + 4 H(+). In terms of biological role, specifically dimethylates two adjacent adenosines (A1518 and A1519) in the loop of a conserved hairpin near the 3'-end of 16S rRNA in the 30S particle. May play a critical role in biogenesis of 30S subunits. The protein is Ribosomal RNA small subunit methyltransferase A of Desulfotalea psychrophila (strain LSv54 / DSM 12343).